Here is a 295-residue protein sequence, read N- to C-terminus: MEAGGGKRAAPEGTNGAAKRARASESSQVGVGSKLKPCTKFFSTSGCPFGSSCHFLHNFPGGYQAAAKMTSHGGTAVAAPPGRMPLGPGAPNGPPTSSVKTRMCNKYNTAEGCKWGSKCHFAHGERELGKPMLLDNSMPHPMGSMPFEAPPMPGPDIVPPSTFGASATAKISVDASLAGGIIGKGGTNTKHISRMTGAKLAIRDNESNPNLKNIELEGTFDQIKHASAMVTELIVRISGNAPPAKNPGRGSHAGGPGSNFKTKLCENFNKGSCTFGDRCHFAHGESELRKPPAAA.

A disordered region spans residues 1-31; that stretch reads MEAGGGKRAAPEGTNGAAKRARASESSQVGV. 2 C3H1-type zinc fingers span residues 32–60 and 98–126; these read GSKL…HNFP and SVKT…HGER. In terms of domain architecture, KH spans 166–230; sequence SATAKISVDA…DQIKHASAMV (65 aa). Residues 259–286 form a C3H1-type 3 zinc finger; that stretch reads NFKTKLCENFNKGSCTFGDRCHFAHGES.

This is Zinc finger CCCH domain-containing protein 44 from Oryza sativa subsp. japonica (Rice).